The primary structure comprises 420 residues: Glucose-1-phosphate adenylyltransferase (420 aa).

Residues Tyr-107, Gly-172, 187–188 (EK), and Ser-205 each bind alpha-D-glucose 1-phosphate.

This sequence belongs to the bacterial/plant glucose-1-phosphate adenylyltransferase family. As to quaternary structure, homotetramer.

It catalyses the reaction alpha-D-glucose 1-phosphate + ATP + H(+) = ADP-alpha-D-glucose + diphosphate. The protein operates within glycan biosynthesis; glycogen biosynthesis. Its function is as follows. Involved in the biosynthesis of ADP-glucose, a building block required for the elongation reactions to produce glycogen. Catalyzes the reaction between ATP and alpha-D-glucose 1-phosphate (G1P) to produce pyrophosphate and ADP-Glc. The protein is Glucose-1-phosphate adenylyltransferase of Agrobacterium fabrum (strain C58 / ATCC 33970) (Agrobacterium tumefaciens (strain C58)).